Reading from the N-terminus, the 864-residue chain is MSDSGPQLDSMGSLTMKSQLQITVISAKLKENKKNWFGPSPYVEVTVDGQSKKTEKCNNTNSPKWKQPLTVIVTPTSKLCFRVWSHQTLKSDVLLGTAGLDIYETLKSNNMKLEEVVMTLQLVGDKEPTETMGDLSVCLDGLQVEAEVVTNGETSCSESTTQNDDGCRTRDDTRVSTNGSEDPEVAASGENKRANGNNSPSLSNGGFKPSRPPRPSRPPPPTPRRPASVNGSPSTNSDSDGSSTGSLPPTNTNVNTSTSEGATSGLIIPLTISGGSGPRPLNTVSQAPLPPGWEQRVDQHGRVYYVDHVEKRTTWDRPEPLPPGWERRVDNMGRIYYVDHFTRTTTWQRPTLESVRNYEQWQLQRSQLQGAMQQFNQRFIYGNQDLFATSQNKEFDPLGPLPPGWEKRTDSNGRVYFVNHNTRITQWEDPRSQGQLNEKPLPEGWEMRFTVDGIPYFVDHNRRATTYIDPRTGKSALDNGPQIAYVRDFKAKVQYFRFWCQQLAMPQHIKITVTRKTLFEDSFQQIMSFSPQDLRRRLWVIFPGEEGLDYGGVAREWFFLLSHEVLNPMYCLFEYAGKDNYCLQINPASYINPDHLKYFRFIGRFIAMALFHGKFIDTGFSLPFYKRILNKPVGLKDLESIDPEFYNSLIWVKENNIEECGLEMYFSVDKEILGEIKSHDLKPNGGNILVTEENKEEYIRMVAEWRLSRGVEEQTQAFFEGFNEILPQQYLQYFDAKELEVLLCGMQEIDLNDWQRHAIYRHYTRTSKQIMWFWQFVKEIDNEKRMRLLQFVTGTCRLPVGGFADLMGSNGPQKFCIEKVGKENWLPRSHTCFNRLDLPPYKSYEQLKEKLLFAIEETEGFGQE.

The region spanning 1–115 is the C2 domain; sequence MSDSGPQLDS…LKSNNMKLEE (115 aa). Residue Ser-2 is modified to N-acetylserine. The span at 151-164 shows a compositional bias: polar residues; sequence NGETSCSESTTQND. The interval 151 to 294 is disordered; sequence NGETSCSEST…SQAPLPPGWE (144 aa). The segment covering 165 to 174 has biased composition (basic and acidic residues); sequence DGCRTRDDTR. The segment covering 195–206 has biased composition (low complexity); that stretch reads NGNNSPSLSNGG. Ser-199 carries the phosphoserine; by MAPK8 modification. The span at 210-224 shows a compositional bias: pro residues; sequence SRPPRPSRPPPPTPR. Phosphothreonine; by MAPK8 is present on Thr-222. A compositionally biased stretch (low complexity) spans 230-259; it reads NGSPSTNSDSDGSSTGSLPPTNTNVNTSTS. Position 232 is a phosphoserine; by MAPK8 (Ser-232). WW domains are found at residues 287–320 and 319–352; these read APLP…RPEP and EPLP…RPTL. Thr-346 carries the phosphothreonine; by SGK3 modification. Residues 356-432 are required for interaction with FYN; it reads RNYEQWQLQR…RITQWEDPRS (77 aa). Tyr-381 carries the phosphotyrosine; by FYN modification. WW domains follow at residues 399–432 and 439–472; these read GPLP…DPRS and KPLP…DPRT. Ser-411 bears the Phosphoserine; by SGK3 mark. Positions 530–864 constitute an HECT domain; the sequence is SPQDLRRRLW…IEETEGFGQE (335 aa). Residues 535–544 form an MAP kinase docking site region; it reads RRRLWVIFPG. Cys-832 acts as the Glycyl thioester intermediate in catalysis.

Monomer. Part of a ternary complex composed of SMAD3, ITCH/AIP4 and NEDD9/HEF1; within the complex NEDD9/HEF1 interacts (via N-terminus) with ITCH/AIP4 (via WW domains); the complex mediates ubiquitination and proteasomal degradation of NEDD9/HEF1. Interacts (via WW domains) with OCNL. Interacts (via WW domains) with NOTCH1. Interacts (via WW domains) JUN. Interacts with JUNB; the interaction promotes ITCH-mediated ubiquitination and degradation of JUNB. Interacts with FYN; the interaction phosphorylates ITCH on Tyr-381 decreasing binding of JUNB. Interacts (via WW domain 2) with N4BP1; the interaction inhibits the E3 ubiquitin-protein ligase activity. Interacts with NDFIP1 and NDFIP2; the interaction with NDFIP proteins activates the E3 ubiquitin-protein ligase and may induce its recruitment to exosomes. Interacts with ARHGEF7. Interacts with RNF11. Interacts (via the WW 1 domain) with NFE2 (via the PXY motif 1); the interaction promotes 'Lys-63'-linked ubiquitination of NFE2, retains it in the cytoplasm and prevents its transactivation activity. Interacts (via WW domains) with CXCR4 (via C-terminus); the interaction depends on CXCR4 phosphorylation. Found in a complex with E3 ligase DTX3L and ESCRT-0 components HGS and STAM. Interacts with DTX3L (via C-terminus); the interaction is increased upon CXCL12 stimulation and inhibits ITCH catalytic activity (the interaction is direct). Interacts with HGS. Interacts (via WW domains) with PCBP2 within a complex containing ITCH, MAVS and PCBP2. Interacts (via WW domains) with TXNIP (via C-terminus). Interacts with p15 BID. Interacts with ERBB4. Interacts with DTX1. Interacts with SPART. Interacts with SNX9 and SNX18. Interacts (via its WW domains) with ATN1. Interacts (via WW domains) with SGK3. Interacts with CBLC. Interacts with OTUD7B. Interacts (via WW domain 1,2 and 3) with PI4K2A; the interaction inhibits PI4K2A catalytic activity and promotes ITCH catalytic activity. Interacts with ARRDC4. Part of a complex containing ITCH, NDFIP1 and MAP3K7. Interacts with UBE2L3; the interaction is mediated by NDFIP1. Interacts with MAPK8/JNK1. Interacts (via WW domains) with ARRDC1 (via PPxY motifs); the interaction is direct and participates in the recruitment of the ubiquitin-protein ligase ITCH to the NOTCH1 receptor. Interacts (via WW domains) with ARRDC2. Interacts (via WW domains) with ARRDC3. Interacts directly with LDLRAD3; this interaction promotes ITCH auto-ubiquitination leading to its degradation. Interacts with ENTREP1; enhances the ubiquitination of CXCR4 by ITCH and its subsequent endocytosis. Interacts with USP12 and WDR48/UAF1; the interaction is more efficient when both USP12 and WDR48/UAF1 are involved and may facilitate the recruitment of the USP12 deubiquitinase complex to Notch. As to quaternary structure, (Microbial infection) Interacts with Epstein-Barr virus LMP2A. On T-cell activation, phosphorylation by the JNK cascade on serine and threonine residues surrounding the PRR domain accelerates the ubiquitination and degradation of JUN and JUNB. The increased ITCH catalytic activity due to phosphorylation by JNK1 may occur due to a conformational change disrupting the interaction between the PRR/WW motifs domain and the HECT domain and, thus exposing the HECT domain. Phosphorylation by FYN reduces interaction with JUNB and negatively controls JUN ubiquitination and degradation. Interacts directly with LDLRAD3; this interaction promotes ITCH auto-ubiquitination leading to its degradation. In terms of processing, monoubiquitinated. Autopolyubiquitinated with 'Lys-63' linkages which does not lead to protein degradation. In terms of tissue distribution, detected in uterus (at protein level). Widely expressed.

It localises to the cell membrane. It is found in the cytoplasm. The protein localises to the nucleus. Its subcellular location is the early endosome membrane. The protein resides in the endosome membrane. The enzyme catalyses S-ubiquitinyl-[E2 ubiquitin-conjugating enzyme]-L-cysteine + [acceptor protein]-L-lysine = [E2 ubiquitin-conjugating enzyme]-L-cysteine + N(6)-ubiquitinyl-[acceptor protein]-L-lysine.. It functions in the pathway protein modification; protein ubiquitination. Its activity is regulated as follows. Activated by NDFIP1- and NDFIP2-binding. Activated by PI4K2A-binding. Inhibited by DTX3L-binding. Inhibited by N4BP1 binding. Its function is as follows. Acts as an E3 ubiquitin-protein ligase which accepts ubiquitin from an E2 ubiquitin-conjugating enzyme in the form of a thioester and then directly transfers the ubiquitin to targeted substrates. It catalyzes 'Lys-29'-, 'Lys-48'- and 'Lys-63'-linked ubiquitin conjugation. Involved in the control of inflammatory signaling pathways. Is an essential component of a ubiquitin-editing protein complex, comprising also TNFAIP3, TAX1BP1 and RNF11, that ensures the transient nature of inflammatory signaling pathways. Promotes the association of the complex after TNF stimulation. Once the complex is formed, TNFAIP3 deubiquitinates 'Lys-63' polyubiquitin chains on RIPK1 and catalyzes the formation of 'Lys-48'-polyubiquitin chains. This leads to RIPK1 proteasomal degradation and consequently termination of the TNF- or LPS-mediated activation of NFKB1. Ubiquitinates RIPK2 by 'Lys-63'-linked conjugation and influences NOD2-dependent signal transduction pathways. Regulates the transcriptional activity of several transcription factors involved in immune response. Ubiquitinates NFE2 by 'Lys-63' linkages and is implicated in the control of the development of hematopoietic lineages. Mediates JUN ubiquitination and degradation. Mediates JUNB ubiquitination and degradation. Critical regulator of type 2 helper T (Th2) cell cytokine production by inducing JUNB ubiquitination and degradation. Involved in the negative regulation of MAVS-dependent cellular antiviral responses. Ubiquitinates MAVS through 'Lys-48'-linked conjugation resulting in MAVS proteasomal degradation. Following ligand stimulation, regulates sorting of Wnt receptor FZD4 to the degradative endocytic pathway probably by modulating PI42KA activity. Ubiquitinates PI4K2A and negatively regulates its catalytic activity. Ubiquitinates chemokine receptor CXCR4 and regulates sorting of CXCR4 to the degradative endocytic pathway following ligand stimulation by ubiquitinating endosomal sorting complex required for transport ESCRT-0 components HGS and STAM. Targets DTX1 for lysosomal degradation and controls NOTCH1 degradation, in the absence of ligand, through 'Lys-29'-linked polyubiquitination. Ubiquitinates SNX9. Ubiquitinates MAP3K7 through 'Lys-48'-linked conjugation. Together with UBR5, involved in the regulation of apoptosis and reactive oxygen species levels through the ubiquitination and proteasomal degradation of TXNIP: catalyzes 'Lys-48'-/'Lys-63'-branched ubiquitination of TXNIP. ITCH synthesizes 'Lys-63'-linked chains, while UBR5 is branching multiple 'Lys-48'-linked chains of substrate initially modified. Mediates the antiapoptotic activity of epidermal growth factor through the ubiquitination and proteasomal degradation of p15 BID. Ubiquitinates BRAT1 and this ubiquitination is enhanced in the presence of NDFIP1. Ubiquitinates NEDD9/HEF1, resulting in proteasomal degradation of NEDD9/HEF1. This Mus musculus (Mouse) protein is E3 ubiquitin-protein ligase Itchy (Itch).